Here is a 387-residue protein sequence, read N- to C-terminus: Zn(2)-C6 fungal-type trascription factor aoiH (387 aa).

A DNA-binding region (zn(2)-C6 fungal-type) is located at residues 21-48 (CDFCALSKVKCDRGQPQCVRCIKSGIDC). The segment covering 68 to 87 (VRSTSATTQGTRRKQQTIAQ) has biased composition (polar residues). A disordered region spans residues 68–94 (VRSTSATTQGTRRKQQTIAQHSPRRRI).

The protein localises to the nucleus. Its function is as follows. Transcription factor; part of the gene cluster that mediates the biosynthesis of a methylated derivative of known natural products orthosporin and diaporthin. Positively regultaes the expression of the non-reducing polyketide synthase aoiG and the O-methyltransferase aoiO. This is Zn(2)-C6 fungal-type trascription factor aoiH from Aspergillus oryzae (strain ATCC 42149 / RIB 40) (Yellow koji mold).